A 568-amino-acid chain; its full sequence is 2-isopropylmalate synthase (568 aa).

Positions 37–313 (PRWLSTDLRD…DPMIDFSNID (277 aa)) constitute a Pyruvate carboxyltransferase domain. 4 residues coordinate Mg(2+): aspartate 46, histidine 252, histidine 254, and asparagine 288. The interval 455-568 (EGVVGVMAYR…CSAVNRAQQS (114 aa)) is regulatory domain.

Belongs to the alpha-IPM synthase/homocitrate synthase family. LeuA type 2 subfamily. In terms of assembly, homodimer. It depends on Mg(2+) as a cofactor.

Its subcellular location is the cytoplasm. It catalyses the reaction 3-methyl-2-oxobutanoate + acetyl-CoA + H2O = (2S)-2-isopropylmalate + CoA + H(+). Its pathway is amino-acid biosynthesis; L-leucine biosynthesis; L-leucine from 3-methyl-2-oxobutanoate: step 1/4. Catalyzes the condensation of the acetyl group of acetyl-CoA with 3-methyl-2-oxobutanoate (2-ketoisovalerate) to form 3-carboxy-3-hydroxy-4-methylpentanoate (2-isopropylmalate). This is 2-isopropylmalate synthase from Thermobifida fusca (strain YX).